Reading from the N-terminus, the 155-residue chain is Conopressin/neurophysin (155 aa).

A signal peptide spans 1-26 (MMSSLCGMPLTYLLTAAVLSLSLTDA). A disulfide bridge connects residues Cys-27 and Cys-32. Gly-35 is modified (glycine amide). 7 disulfide bridges follow: Cys-50-Cys-94, Cys-53-Cys-67, Cys-61-Cys-84, Cys-68-Cys-74, Cys-101-Cys-115, Cys-109-Cys-127, and Cys-116-Cys-121. An N-linked (GlcNAc...) asparagine glycan is attached at Asn-88.

Belongs to the vasopressin/oxytocin family. Post-translationally, seven disulfide bonds are present in neurophysin.

Its subcellular location is the secreted. The protein is Conopressin/neurophysin of Lymnaea stagnalis (Great pond snail).